The following is a 197-amino-acid chain: MTITINNYNNDKKNLILGLTGSVATIKAKLLVEQLIQHFNLIVIPTETSLKFLSDQDFEFISSKCKIYKDKDEWENVDLLKRSALHIDLRNWANSILISPCSANTLGKISNGLCDNLLTSLIRAWDYKNKSMILAPAMNTMMWENPFTFKHIETLKSISPNVFIIDPIEKKLFCGDIGMGAMEQVPKIVDFTINNLK.

FMN contacts are provided by residues Phe-52 and 102 to 105 (SANT). Asn-139 serves as a coordination point for substrate. Residue Cys-174 is the Proton donor of the active site.

This sequence belongs to the HFCD (homooligomeric flavin containing Cys decarboxylase) superfamily. Homotrimer. FMN serves as cofactor.

The catalysed reaction is N-[(R)-4-phosphopantothenoyl]-L-cysteine + H(+) = (R)-4'-phosphopantetheine + CO2. It participates in cofactor biosynthesis; coenzyme A biosynthesis; CoA from (R)-pantothenate: step 3/5. Functionally, necessary for the biosynthesis of coenzyme A. Catalyzes the decarboxylation of 4-phosphopantothenoylcysteine to form 4'-phosphopantotheine. The sequence is that of Putative phosphopantothenoylcysteine decarboxylase (ppcdc) from Dictyostelium discoideum (Social amoeba).